The following is a 151-amino-acid chain: Centrin-A (151 aa).

EF-hand domains follow at residues 80-115 (DVYASFEQAFSLFDRDGSGYITFDDLKTVAINLGEA) and 116-151 (RSDSKLYNMIKRADLNGDKKISKIEFIQLLYWKKIY). Ca(2+)-binding residues include aspartate 93, aspartate 95, serine 97, tyrosine 99, aspartate 104, aspartate 129, asparagine 131, aspartate 133, lysine 135, and glutamate 140.

This sequence belongs to the centrin family.

It is found in the cytoplasm. The protein resides in the cytoskeleton. The protein localises to the microtubule organizing center. Its subcellular location is the centrosome. It localises to the nucleus. Plays a fundamental role in microtubule-organizing center structure and function. The sequence is that of Centrin-A (cenA) from Dictyostelium discoideum (Social amoeba).